A 321-amino-acid chain; its full sequence is Fructose-1,6-bisphosphatase 2 class 2 (321 aa).

The Mn(2+) site is built by D32, E56, D84, and E87. Substrate is bound by residues 87–89 (EGT), Y118, 163–165 (KPR), 185–187 (DGD), and G209. Position 212 (E212) interacts with Mn(2+).

It belongs to the FBPase class 2 family. In terms of assembly, homodimer. The cofactor is Mn(2+).

The enzyme catalyses beta-D-fructose 1,6-bisphosphate + H2O = beta-D-fructose 6-phosphate + phosphate. Its activity is regulated as follows. Competitively inhibited by low concentrations of phosphate (IC50 of 1.2 mM) and is also sensitive to Li(+) (IC50 of 15.8 mM). Also inhibited by 1 mM ATP or 50 mM KCl (60% and 20% residual activity, respectively). Slightly activated (40-50%) by the addition of 1 mM dithiothreitol in vitro. Its function is as follows. Catalyzes the hydrolysis of fructose 1,6-bisphosphate to fructose 6-phosphate. Also displays a low activity toward glucose 1,6-bisphosphate, and no activity against ribulose 1,5-bisphosphate, fructose 2,6-bisphosphate, or fructose 1-phosphate. This is Fructose-1,6-bisphosphatase 2 class 2 (yggF) from Escherichia coli (strain K12).